The primary structure comprises 88 residues: Apolipoprotein C-I (88 aa).

A signal peptide spans 1–26 (MRLILSLPVLVVVLSMVLEGPAPAQA).

It belongs to the apolipoprotein C1 family. As to expression, expressed in the liver.

Its subcellular location is the secreted. Functionally, inhibitor of lipoprotein binding to the low density lipoprotein (LDL) receptor, LDL receptor-related protein, and very low density lipoprotein (VLDL) receptor. Associates with high density lipoproteins (HDL) and the triacylglycerol-rich lipoproteins in the plasma and makes up about 10% of the protein of the VLDL and 2% of that of HDL. Appears to interfere directly with fatty acid uptake and is also the major plasma inhibitor of cholesteryl ester transfer protein (CETP). Binds free fatty acids and reduces their intracellular esterification. Modulates the interaction of APOE with beta-migrating VLDL and inhibits binding of beta-VLDL to the LDL receptor-related protein. The polypeptide is Apolipoprotein C-I (APOC1) (Canis lupus familiaris (Dog)).